A 403-amino-acid chain; its full sequence is MAVQTLDDLLNAGVEGRAVLVRSDLNVPLDGDRITDPGRIIASAPTLKALAEAGAKVIVTAHLGRPKGEPDPQYSLAPVAVKLAEVLGRNVQLAGDVVGQDALARAEGLTDGDVLLLENIRFDPRETSKDEAERTKLAKALVELVGDDGAFVSDGFGVVHRAQASVYEVAKLLPHYAGKLVEAEIKVLGKLTEEPERPYAVVLGGSKVSDKLAVIEALAPKVDTLVIGGGMYYTFLAAQGVSVGNSLCEESMIDTCKALLEQYADVIHIPQDVVIADSFSADAESKIVSVLEIPDGWMGLDIGPQSVRRFAAILTSAKTVFWNGPMGVFEFEKFAAGTKGVAEAIIEATGKGAYSVVGGGDSAAAVRQLGLPEDGFSHISTGGGASLEYLEGKELPGIAVLEG.

Residues 24–26 (DLN), Arg39, 62–65 (HLGR), Arg121, and Arg161 contribute to the substrate site. ATP is bound by residues Lys211, Gly299, Glu330, and 359–362 (GGDS).

This sequence belongs to the phosphoglycerate kinase family. In terms of assembly, monomer.

Its subcellular location is the cytoplasm. The catalysed reaction is (2R)-3-phosphoglycerate + ATP = (2R)-3-phospho-glyceroyl phosphate + ADP. It participates in carbohydrate degradation; glycolysis; pyruvate from D-glyceraldehyde 3-phosphate: step 2/5. This chain is Phosphoglycerate kinase, found in Rhodococcus jostii (strain RHA1).